We begin with the raw amino-acid sequence, 343 residues long: Protease HtpX homolog (343 aa).

2 helical membrane-spanning segments follow: residues 7 to 24 and 29 to 46; these read TMLLAFMTALFMGVGYLV and GMVVALFIAGGLNFFSYW. Zn(2+) is bound at residue histidine 130. Glutamate 131 is a catalytic residue. A Zn(2+)-binding site is contributed by histidine 134. 2 helical membrane-spanning segments follow: residues 145-165 and 177-197; these read LTATIAGAISMLGNFALLMGM and GAGMLGTVIALFVAPFAAMLV. Zn(2+) is bound at residue glutamate 206. Residues 308-343 form a disordered region; that stretch reads NLEDEDLNPEAQNGFTHNQKKKTVRRGKDRPTWLRH. Positions 325-335 are enriched in basic residues; the sequence is NQKKKTVRRGK.

It belongs to the peptidase M48B family. Zn(2+) is required as a cofactor.

It is found in the cell inner membrane. The protein is Protease HtpX homolog of Bartonella bacilliformis (strain ATCC 35685 / KC583 / Herrer 020/F12,63).